Consider the following 1280-residue polypeptide: Dynactin subunit 1 (1280 aa).

Positions 1-26 are disordered; that stretch reads MAQSKRHMYNRTPSGSRMSTEASARP. Residues 11–22 are compositionally biased toward polar residues; the sequence is RTPSGSRMSTEA. Positions 48-90 constitute a CAP-Gly domain; the sequence is GATLFATGKWVGVILDEAKGKNDGTVQGRKYFTCDEGHGIFVR. Positions 99–223 are disordered; it reads DGADTTSPET…SKEEEGLRDQ (125 aa). Over residues 102–114 the composition is skewed to polar residues; the sequence is DTTSPETPDSSAS. Phosphothreonine is present on residues T108, T145, T146, and T147. Positions 129–152 are enriched in basic residues; it reads SKLRGLKPKKAPTARKTTTRRPKP. The segment covering 161-205 has biased composition (low complexity); that stretch reads AGPSSSLGPSGSASAGELSSSEPSTPAQTPLAAPIIPTPALTSPG. A Phosphoserine; by PLK1 modification is found at S179. S212 carries the post-translational modification Phosphoserine; by CDK1. A compositionally biased stretch (basic and acidic residues) spans 214–223; it reads SKEEEGLRDQ. Coiled coils occupy residues 214–513 and 942–1048; these read SKEE…ADYQ and LKLE…EGLR. Residues 910 to 1280 form an interaction with HPS6 region; sequence EYDAERPPSK…LHQLHGRLIS (371 aa). Positions 1064–1089 are disordered; the sequence is GEEQQRGGTPGQAPGALPGPGPVKDS. Residues 1184 to 1213 adopt a coiled-coil conformation; sequence SAQLMEQVAQLKSLSDTIEKLKDEVLKETV.

This sequence belongs to the dynactin 150 kDa subunit family. As to quaternary structure, monomer and homodimer. Subunit of dynactin, a multiprotein complex part of a tripartite complex with dynein and a adapter, such as BICDL1, BICD2 or HOOK3. The dynactin complex is built around ACTR1A/ACTB filament and consists of an actin-related filament composed of a shoulder domain, a pointed end and a barbed end. Its length is defined by its flexible shoulder domain. The soulder is composed of 2 DCTN1 subunits, 4 DCTN2 and 2 DCTN3. DCTN1/p150(glued) binds directly to microtubules and to cytoplasmic dynein. The 4 DCNT2 (via N-terminus) bind the ACTR1A filament and act as molecular rulers to determine the length. The pointed end is important for binding dynein-dynactin cargo adapters. Consists of 4 subunits: ACTR10, DCNT4, DCTN5 and DCTN6. The barbed end is composed of a CAPZA1:CAPZB heterodimers, which binds ACTR1A/ACTB filament and dynactin and stabilizes dynactin. Interacts with the C-terminus of MAPRE1, MAPRE2 and MAPRE3. Interacts (via C-terminus) with SNX6. Interacts with CLN3, DYNAP, ECPAS and FBXL5. Interacts with MISP; this interaction regulates its distribution at the cell cortex. Interacts with CEP131. Interacts with CEP126. Interacts with CLIP1. Interacts with dynein intermediate chain and dynein heavy chain. Interacts with PLK1 (via POLO-box domain). Interacts with TBCB. Binds preferentially to tyrosinated microtubules than to detyrosinated microtubules. Interacts with PARD6A. Interacts with HPS6. Interacts with KIF3A. Interacts with BICD2. Interacts with DST (isoform 9). Interacts with DST (isoform 1). Identified in a complex with MREG and RILP. Interacts with BCCIP (isoform 2/alpha). Interacts with DCDC1. Interacts with AKNA. Interacts with DYNC1I2. Interacts with RUFY3 and RUFY4. Post-translationally, ubiquitinated by a SCF complex containing FBXL5, leading to its degradation by the proteasome. In terms of processing, phosphorylation by SLK at Thr-145, Thr-146 and Thr-147 targets DCTN1 to the centrosome. It is uncertain if SLK phosphorylates all three threonines or one or two of them. PLK1-mediated phosphorylation at Ser-179 is essential for its localization in the nuclear envelope and promotes its dissociation from microtubules during early mitosis and positively regulates nuclear envelope breakdown during prophase. As to expression, ubiquitous with a high level expression observed in the brain (at protein level).

It is found in the cytoplasm. The protein localises to the cytoskeleton. Its subcellular location is the microtubule organizing center. It localises to the centrosome. The protein resides in the centriole. It is found in the spindle. The protein localises to the nucleus envelope. Its subcellular location is the cell cortex. Functionally, part of the dynactin complex that activates the molecular motor dynein for ultra-processive transport along microtubules. Plays a key role in dynein-mediated retrograde transport of vesicles and organelles along microtubules by recruiting and tethering dynein to microtubules. Binds to both dynein and microtubules providing a link between specific cargos, microtubules and dynein. Essential for targeting dynein to microtubule plus ends, recruiting dynein to membranous cargos and enhancing dynein processivity (the ability to move along a microtubule for a long distance without falling off the track). Can also act as a brake to slow the dynein motor during motility along the microtubule. Can regulate microtubule stability by promoting microtubule formation, nucleation and polymerization and by inhibiting microtubule catastrophe in neurons. Inhibits microtubule catastrophe by binding both to microtubules and to tubulin, leading to enhanced microtubule stability along the axon. Plays a role in metaphase spindle orientation. Plays a role in centriole cohesion and subdistal appendage organization and function. Its recruitment to the centriole in a KIF3A-dependent manner is essential for the maintenance of centriole cohesion and the formation of subdistal appendage. Also required for microtubule anchoring at the mother centriole. Plays a role in primary cilia formation. This Rattus norvegicus (Rat) protein is Dynactin subunit 1 (Dctn1).